We begin with the raw amino-acid sequence, 390 residues long: Protein snail (390 aa).

An SNAG domain region spans residues 1–20 (MAANYKSCPLKKRPIVFVEE). Disordered stretches follow at residues 29 to 65 (ALTKDSQFAQDQPQDLSLKRGRDEETQDYQQPEPKRD) and 162 to 191 (QSVYSYQQMTPPSSPGSDLETGSEPEDLSV). Composition is skewed to polar residues over residues 32 to 43 (KDSQFAQDQPQD) and 162 to 172 (QSVYSYQQMTP). C2H2-type zinc fingers lie at residues 245 to 267 (FKCDECQKMYSTSMGLSKHRQFH), 280 to 302 (HSCEECGKLYTTIGALKMHIRTH), 306 to 328 (CKCPICGKAFSRPWLLQGHIRTH), 334 to 356 (FQCPDCPRSFADRSNLRAHQQTH), and 362 to 385 (YACQVCHKSFSRMSLLNKHSSSNC).

The protein belongs to the snail C2H2-type zinc-finger protein family.

The protein resides in the nucleus. Essential for the correct specification of ventral-dorsal patterns. The polypeptide is Protein snail (sna) (Drosophila melanogaster (Fruit fly)).